A 452-amino-acid polypeptide reads, in one-letter code: Isocitrate dehydrogenase [NADP], mitochondrial (452 aa).

A mitochondrion-targeting transit peptide spans 1–39 (MAGYLRAVSSLCRASGSTRTWAPAALNVPSWPEQPRRHY). 4 positions are modified to N6-acetyllysine: Lys-45, Lys-48, Lys-67, and Lys-69. Lys-80 and Lys-106 each carry N6-acetyllysine; alternate. An N6-succinyllysine; alternate mark is found at Lys-80 and Lys-106. NADP(+) contacts are provided by residues 115 to 117 (TIT) and Arg-122. D-threo-isocitrate is bound at residue Thr-117. D-threo-isocitrate contacts are provided by residues 134 to 140 (SPNGTIR) and Arg-149. Lys-155 is modified (N6-acetyllysine). Residue Lys-166 is modified to N6-acetyllysine; alternate. Lys-166 bears the N6-succinyllysine; alternate mark. Position 172 (Arg-172) interacts with D-threo-isocitrate. An N6-acetyllysine; alternate mark is found at Lys-180 and Lys-193. Lys-180 and Lys-193 each carry N6-succinyllysine; alternate. The residue at position 199 (Lys-199) is an N6-acetyllysine. N6-acetyllysine; alternate is present on Lys-256. Lys-256 bears the N6-succinyllysine; alternate mark. N6-acetyllysine occurs at positions 263, 272, 275, and 280. Lys-282 is modified (N6-acetyllysine; alternate). Residue Lys-282 is modified to N6-succinyllysine; alternate. Asp-291 provides a ligand contact to Mn(2+). Lys-299 lines the NADP(+) pocket. Mn(2+) is bound at residue Asp-314. NADP(+) contacts are provided by residues 349-354 (GTVTRH) and Asn-367. Lys-384 carries the post-translational modification N6-acetyllysine; alternate. N6-succinyllysine; alternate is present on Lys-384. 3 positions are modified to N6-acetyllysine: Lys-400, Lys-413, and Lys-442.

Belongs to the isocitrate and isopropylmalate dehydrogenases family. Homodimer. Mg(2+) serves as cofactor. It depends on Mn(2+) as a cofactor. Post-translationally, acetylation at Lys-413 dramatically reduces catalytic activity. Deacetylated by SIRT3.

The protein localises to the mitochondrion. The enzyme catalyses D-threo-isocitrate + NADP(+) = 2-oxoglutarate + CO2 + NADPH. Its function is as follows. Plays a role in intermediary metabolism and energy production. It may tightly associate or interact with the pyruvate dehydrogenase complex. The sequence is that of Isocitrate dehydrogenase [NADP], mitochondrial (Idh2) from Rattus norvegicus (Rat).